Reading from the N-terminus, the 260-residue chain is G patch domain-containing protein 11 (260 aa).

Positions 25–61 (MLRQIREARRKEEKRQEANLKNRQKSIKEEEQERRDM) form a coiled coil. The disordered stretch occupies residues 33 to 60 (RRKEEKRQEANLKNRQKSIKEEEQERRD). Residues 69–115 (CENKGFALLQKMGYKSGQALGKSGDGIVEPIPLNVKTGKSGIGHETL) enclose the G-patch domain. K123 bears the N6-acetyllysine mark. The segment at 187–212 (WLRPEEETEEETEEEKEQDEDEYKSE) is disordered. Residues 192–210 (EETEEETEEEKEQDEDEYK) show a composition bias toward acidic residues.

This sequence belongs to the GPATCH11 family.

It localises to the chromosome. Its subcellular location is the centromere. The protein localises to the kinetochore. The chain is G patch domain-containing protein 11 (GPATCH11) from Bos taurus (Bovine).